Consider the following 193-residue polypeptide: Ion-translocating oxidoreductase complex subunit A (193 aa).

6 helical membrane-spanning segments follow: residues 5–25 (ALLF…FLGL), 39–59 (IGMG…SWLV), 62–82 (FILV…LVLA), 102–122 (LLGI…VVLL), 134–154 (TIYG…FAAI), and 171–191 (SIAL…TGLV).

It belongs to the NqrDE/RnfAE family. As to quaternary structure, the complex is composed of six subunits: RnfA, RnfB, RnfC, RnfD, RnfE and RnfG.

The protein localises to the cell inner membrane. Functionally, part of a membrane-bound complex that couples electron transfer with translocation of ions across the membrane. This is Ion-translocating oxidoreductase complex subunit A from Pectobacterium carotovorum subsp. carotovorum (strain PC1).